The following is a 1074-amino-acid chain: Formin-G (1074 aa).

One can recognise a GBD/FH3 domain in the interval 34–423; the sequence is LQMQQGSKTY…DKINEFEKKI (390 aa). Disordered regions lie at residues 476 to 507 and 549 to 639; these read QSIS…DIQS and FTPT…NPSS. Over residues 481 to 503 the composition is skewed to low complexity; the sequence is SQDSSNNQKASSSSSNTSTLNDS. Residues 502 to 530 adopt a coiled-coil conformation; it reads DSDIQSIQSSLKEATLEIERLKLAIEEKM. Polar residues predominate over residues 549-561; the sequence is FTPTSPDISNDGQ. Pro residues predominate over residues 568-610; the sequence is APPPSPSPPPPISGGGAPPPPPPPPPPPSGGGAPPPPPPPPPS. In terms of domain architecture, FH1 spans 597-623; it reads GGGAPPPPPPPPPSGGKKAGAPGAPPT. One can recognise an FH2 domain in the interval 631 to 1031; it reads NKPVINPSSK…ASGDNGAVQN (401 aa). The stretch at 914-971 forms a coiled coil; that stretch reads DINDLEKQFNISKNNCKKVLEANIPSSSKFQSTIGSFLEKTEIDIKNLKENQKNIVDS. Positions 1037 to 1073 constitute a DAD domain; that stretch reads GADPLAALANAIKLGQTGLRKRPGPENSSGGSQLNLN. The segment at 1053–1074 is disordered; sequence TGLRKRPGPENSSGGSQLNLNK. Polar residues predominate over residues 1062 to 1074; that stretch reads ENSSGGSQLNLNK.

It belongs to the formin homology family. Diaphanous subfamily. As to quaternary structure, interacts (via GBD/FH3 domain) with activated Rho-GTPases.

In terms of biological role, formins play an important role in the nucleation of actin and the formation of linear actin filaments. This chain is Formin-G (forG), found in Dictyostelium discoideum (Social amoeba).